The sequence spans 369 residues: Tyrosine-protein phosphatase non-receptor type 5 (369 aa).

S49 bears the Phosphoserine; by PKA mark. The residue at position 59 (T59) is a Phosphothreonine; by MAPK. At S72 the chain carries Phosphoserine; by MAPK. The Tyrosine-protein phosphatase domain occupies 104–359; the sequence is LQAEFFEIPM…QFVHHAMSLY (256 aa). Substrate contacts are provided by residues D265, 300–306, and Q344; that span reads CSAGIGR. C300 serves as the catalytic Phosphocysteine intermediate.

Belongs to the protein-tyrosine phosphatase family. Non-receptor class subfamily. Phosphorylation at Ser-49 by PKA deactivates PTPN5. Phosphorylation at Thr-59 and Ser-72 by MAPKs stabilizes the phosphatase, dephosphorylation of these sites results in ubiquitin-mediated degradation of the active phosphatase. In terms of tissue distribution, expressed in the central nervous system except in the cerebellum. Enriched within the striatum relative to other brain areas.

Its subcellular location is the cytoplasm. The catalysed reaction is O-phospho-L-tyrosyl-[protein] + H2O = L-tyrosyl-[protein] + phosphate. In terms of biological role, may regulate the activity of several effector molecules involved in synaptic plasticity and neuronal cell survival, including MAPKs, Src family kinases and NMDA receptors. This chain is Tyrosine-protein phosphatase non-receptor type 5 (Ptpn5), found in Rattus norvegicus (Rat).